Reading from the N-terminus, the 117-residue chain is uncharacterized protein (117 aa).

The chain crosses the membrane as a helical span at residues 10–32; sequence VCYLGDIAASGFLNSIATALIAV.

The protein localises to the membrane. This is an uncharacterized protein from Rickettsia conorii (strain ATCC VR-613 / Malish 7).